A 97-amino-acid polypeptide reads, in one-letter code: METNSHYFYVLSCRDGSLYAGYTNNIEKRLKTHNDGKGAKYTRARLPVKLHYAECFSTKREAMQAEYYFKKLSRKNKERYIEEKRREGVDYQPAKEF.

A GIY-YIG domain is found at 4–79 (NSHYFYVLSC…KKLSRKNKER (76 aa)).

It belongs to the UPF0213 family.

This is UPF0213 protein BLi00048/BL00536 from Bacillus licheniformis (strain ATCC 14580 / DSM 13 / JCM 2505 / CCUG 7422 / NBRC 12200 / NCIMB 9375 / NCTC 10341 / NRRL NRS-1264 / Gibson 46).